Consider the following 504-residue polypeptide: Xylose import ATP-binding protein XylG (504 aa).

ABC transporter domains are found at residues 6 to 243 (LEMK…VGRE) and 260 to 504 (LKVD…TGGK). ATP is bound at residue 38 to 45 (GENGAGKS).

Belongs to the ABC transporter superfamily. Xylose importer (TC 3.A.1.2.4) family. As to quaternary structure, the complex is composed of two ATP-binding proteins (XylG), two transmembrane proteins (XylH) and a solute-binding protein (XylF).

Its subcellular location is the cell membrane. It catalyses the reaction D-xylose(out) + ATP + H2O = D-xylose(in) + ADP + phosphate + H(+). Its function is as follows. Part of the ABC transporter complex XylFGH involved in xylose import. Responsible for energy coupling to the transport system. The polypeptide is Xylose import ATP-binding protein XylG (Geobacillus kaustophilus (strain HTA426)).